A 236-amino-acid polypeptide reads, in one-letter code: Bax inhibitor 1 (236 aa).

Topologically, residues 1 to 29 are cytoplasmic; the sequence is MNIFDRKINFDALFKFSHITPSTQQHLKK. A Glycyl lysine isopeptide (Lys-Gly) (interchain with G-Cter in ubiquitin) cross-link involves residue lysine 7. The helical transmembrane segment at 30–50 threads the bilayer; that stretch reads VYASFALCMFVAAAGAYIHVV. Residues 51–52 lie on the Lumenal side of the membrane; the sequence is TH. The helical transmembrane segment at 53–73 threads the bilayer; sequence FIQAGLLSALGSLGLMIWLMA. Topologically, residues 74 to 86 are cytoplasmic; the sequence is TPHSHETEQKRLG. Residues 87 to 107 form a helical membrane-spanning segment; that stretch reads LLAGFAFLTGVGLGPALDLCI. Residues 108-112 are Lumenal-facing; sequence AINPS. The helical transmembrane segment at 113-133 threads the bilayer; it reads ILPTAFMGTAMIFTCFTLSAL. Residues 134-139 lie on the Cytoplasmic side of the membrane; the sequence is YARRRS. The chain crosses the membrane as a helical span at residues 140 to 160; the sequence is YLFLGGILMSAMSLMLLSSLG. At 161–166 the chain is on the lumenal side; the sequence is NLFFGS. The helical transmembrane segment at 167 to 187 threads the bilayer; that stretch reads VWLFQANLYMGLVVMCGFVLF. Topologically, residues 188–206 are cytoplasmic; that stretch reads DTQLIIEKAENGDKDYIWH. An intramembrane region (helical) is located at residues 207-227; it reads CVDLFLDFVTLFRKLMMILAM. The Cytoplasmic portion of the chain corresponds to 228-236; it reads NEKDKKKKK.

It belongs to the BI1 family. Interacts with BCL2 and BCL2L1. Interacts with ERN1. Post-translationally, ubiquitinated by BFAR, leading to proteasomal degradation.

The protein resides in the endoplasmic reticulum membrane. Endoplasmic reticulum (ER)-resident protein that confers cellular protection as an anti-apoptotic protein by limiting multiple stress-inducing pathways surrounding the endoplasmic reticulum and mitochondria. Inhibits the activities of the key sensor for the endoplasmic reticulum unfolded protein response IRE1alpha/ERN1 both directly and by blocking BAX/BAK binding. Modulates ER calcium homeostasis by acting as a calcium-leak channel. Negatively regulates autophagy and autophagosome formation, especially during periods of nutrient deprivation, and reduces cell survival during starvation. The polypeptide is Bax inhibitor 1 (TMBIM6) (Bos taurus (Bovine)).